The following is a 209-amino-acid chain: Uracil phosphoribosyltransferase (209 aa).

Residues Arg-79, Arg-104, and 131–139 (DPMLATGVS) each bind 5-phospho-alpha-D-ribose 1-diphosphate. Residues Ile-194 and 199–201 (GDA) contribute to the uracil site. Asp-200 serves as a coordination point for 5-phospho-alpha-D-ribose 1-diphosphate.

It belongs to the UPRTase family. Mg(2+) serves as cofactor.

It catalyses the reaction UMP + diphosphate = 5-phospho-alpha-D-ribose 1-diphosphate + uracil. The protein operates within pyrimidine metabolism; UMP biosynthesis via salvage pathway; UMP from uracil: step 1/1. Allosterically activated by GTP. In terms of biological role, catalyzes the conversion of uracil and 5-phospho-alpha-D-ribose 1-diphosphate (PRPP) to UMP and diphosphate. The protein is Uracil phosphoribosyltransferase of Thermotoga petrophila (strain ATCC BAA-488 / DSM 13995 / JCM 10881 / RKU-1).